The primary structure comprises 750 residues: Photosystem I P700 chlorophyll a apoprotein A1 (750 aa).

Helical transmembrane passes span 70–93 (VFSAHFGQLSIIFLWLSGMYFHGA), 156–179 (LYCTAIGALVFAALMLFAGWFHYH), 195–219 (LNHHLAGLLGLGSLSWAGHQVHVSL), 291–309 (IAHHHLAIAILFLIAGHMY), 346–369 (WHAQLSLNLAMLGSSTIVVAHHMY), 385–411 (LSLFTHHMWIGGFLIVGAAAHAAIFMV), 433–455 (AIISHLNWACIFLGFHSFGLYIH), and 531–549 (FLVHHIHAFTIHVTVLILL). [4Fe-4S] cluster is bound by residues Cys573 and Cys582. 2 helical membrane-spanning segments follow: residues 589-610 (HVFLGLFWMYNAISVVIFHFSW) and 664-686 (LSAYGLFFLGAHFVWAFSLMFLF). His675 contacts chlorophyll a'. Met683 and Tyr691 together coordinate chlorophyll a. Trp692 serves as a coordination point for phylloquinone. Residues 724–744 (AVGVTHYLLGGIATTWAFFLA) traverse the membrane as a helical segment.

This sequence belongs to the PsaA/PsaB family. In terms of assembly, the PsaA/B heterodimer binds the P700 chlorophyll special pair and subsequent electron acceptors. PSI consists of a core antenna complex that captures photons, and an electron transfer chain that converts photonic excitation into a charge separation. The eukaryotic PSI reaction center is composed of at least 11 subunits. P700 is a chlorophyll a/chlorophyll a' dimer, A0 is one or more chlorophyll a, A1 is one or both phylloquinones and FX is a shared 4Fe-4S iron-sulfur center. is required as a cofactor.

It localises to the plastid. The protein resides in the chloroplast thylakoid membrane. It catalyses the reaction reduced [plastocyanin] + hnu + oxidized [2Fe-2S]-[ferredoxin] = oxidized [plastocyanin] + reduced [2Fe-2S]-[ferredoxin]. Functionally, psaA and PsaB bind P700, the primary electron donor of photosystem I (PSI), as well as the electron acceptors A0, A1 and FX. PSI is a plastocyanin-ferredoxin oxidoreductase, converting photonic excitation into a charge separation, which transfers an electron from the donor P700 chlorophyll pair to the spectroscopically characterized acceptors A0, A1, FX, FA and FB in turn. Oxidized P700 is reduced on the lumenal side of the thylakoid membrane by plastocyanin. This is Photosystem I P700 chlorophyll a apoprotein A1 from Liriodendron tulipifera (Tuliptree).